The sequence spans 356 residues: Guanine nucleotide-binding protein alpha-2 subunit (356 aa).

Residue Gly-2 is the site of N-myristoyl glycine attachment. The S-palmitoyl cysteine moiety is linked to residue Cys-4. In terms of domain architecture, G-alpha spans Arg-32–Tyr-356. The tract at residues Lys-35–Thr-48 is G1 motif. Residues Glu-43, Gly-45, Lys-46, Ser-47, Thr-48, Asp-153, Leu-178, Thr-184, Gly-206, Asn-272, Lys-273, Asp-275, and Ala-328 each coordinate GTP. Mg(2+) is bound at residue Ser-47. The segment at Asp-176–Thr-184 is G2 motif. Thr-184 is a binding site for Mg(2+). Residues Phe-199 to Arg-208 are G3 motif. A G4 motif region spans residues Ile-268 to Asp-275. The segment at Thr-326–Thr-331 is G5 motif.

It belongs to the G-alpha family. G(q) subfamily. In terms of assembly, g proteins are composed of 3 units; alpha, beta and gamma. The alpha chain contains the guanine nucleotide binding site. Requires Mg(2+) as cofactor.

Functionally, guanine nucleotide-binding proteins (G proteins) are involved as modulators or transducers in various transmembrane signaling systems. Involved in behavioral responses to P.aeruginosa by controlling the expression of daf-7, a member of the TGF-beta family, in ASJ sensory neurons. The polypeptide is Guanine nucleotide-binding protein alpha-2 subunit (gpa-2) (Caenorhabditis elegans).